The primary structure comprises 123 residues: Small ribosomal subunit protein uS12c (123 aa).

Belongs to the universal ribosomal protein uS12 family. As to quaternary structure, part of the 30S ribosomal subunit.

The protein localises to the plastid. It localises to the chloroplast. Its function is as follows. With S4 and S5 plays an important role in translational accuracy. Located at the interface of the 30S and 50S subunits. The polypeptide is Small ribosomal subunit protein uS12c (rps12) (Chaetosphaeridium globosum (Charophycean green alga)).